The following is a 344-amino-acid chain: MAP3K12-binding inhibitory protein 1 (344 aa).

At Ser91 the chain carries Phosphoserine. Glycyl lysine isopeptide (Lys-Gly) (interchain with G-Cter in SUMO2) cross-links involve residues Lys94, Lys118, Lys129, Lys139, Lys153, and Lys235. Residues 172–344 (AEINENNVRE…AESMATHHLP (173 aa)) form an interaction with MAP3K12 region. The leucine-zipper 1 stretch occupies residues 271–285 (IYQRIKKLEDKILEL). Lys301 carries the post-translational modification N6-acetyllysine; alternate. Residue Lys301 forms a Glycyl lysine isopeptide (Lys-Gly) (interchain with G-Cter in SUMO2); alternate linkage. Glycyl lysine isopeptide (Lys-Gly) (interchain with G-Cter in SUMO2) cross-links involve residues Lys304 and Lys325. The leucine-zipper 2 stretch occupies residues 314–329 (LAELDEKISALKQALL).

As to quaternary structure, component of the ADA2A-containing complex (ATAC), composed of KAT14, KAT2A, TADA2L, TADA3L, ZZ3, MBIP, WDR5, YEATS2, CCDC101 and DR1. In the complex, it probably interacts directly with KAT2A, KAT14 and WDR5. In terms of tissue distribution, ubiquitous. High expression seen in the heart and lung.

It localises to the nucleus. The protein resides in the cytoplasm. Its function is as follows. Inhibits the MAP3K12 activity to induce the activation of the JNK/SAPK pathway. Component of the ATAC complex, a complex with histone acetyltransferase activity on histones H3 and H4. The sequence is that of MAP3K12-binding inhibitory protein 1 (MBIP) from Homo sapiens (Human).